The sequence spans 240 residues: Arylmalonate decarboxylase (240 aa).

The catalysed reaction is 2-aryl-2-methylmalonate + H(+) = 2-arylpropionate + CO2. The polypeptide is Arylmalonate decarboxylase (Bordetella bronchiseptica (Alcaligenes bronchisepticus)).